Consider the following 427-residue polypeptide: Trigger factor (427 aa).

Positions 163 to 248 (GDTVVIDFVG…VHEVKAKEVP (86 aa)) constitute a PPIase FKBP-type domain.

It belongs to the FKBP-type PPIase family. Tig subfamily.

It is found in the cytoplasm. It carries out the reaction [protein]-peptidylproline (omega=180) = [protein]-peptidylproline (omega=0). Its function is as follows. Involved in protein export. Acts as a chaperone by maintaining the newly synthesized protein in an open conformation. Functions as a peptidyl-prolyl cis-trans isomerase. This Streptococcus equi subsp. zooepidemicus (strain H70) protein is Trigger factor.